A 349-amino-acid chain; its full sequence is Protein RecA (349 aa).

64 to 71 lines the ATP pocket; it reads GPESSGKT.

This sequence belongs to the RecA family.

The protein resides in the cytoplasm. In terms of biological role, can catalyze the hydrolysis of ATP in the presence of single-stranded DNA, the ATP-dependent uptake of single-stranded DNA by duplex DNA, and the ATP-dependent hybridization of homologous single-stranded DNAs. It interacts with LexA causing its activation and leading to its autocatalytic cleavage. The chain is Protein RecA from Rhodopseudomonas palustris (strain ATCC BAA-98 / CGA009).